The following is a 339-amino-acid chain: Adenylosuccinate synthetase (339 aa).

GTP-binding positions include 12–18 (GDEGKGS) and 42–44 (GHS). D13 serves as the catalytic Proton acceptor. The Mg(2+) site is built by D13 and G42. Residues 13 to 16 (DEGK), 40 to 43 (NAGH), T127, R141, Q179, T194, and R256 contribute to the IMP site. H43 serves as the catalytic Proton donor. Substrate is bound at residue 252–258 (TVTGRRR). GTP-binding positions include R258, 284 to 286 (MLD), and 324 to 326 (KTG).

It belongs to the adenylosuccinate synthetase family. Homodimer. Requires Mg(2+) as cofactor.

The protein localises to the cytoplasm. It carries out the reaction IMP + L-aspartate + GTP = N(6)-(1,2-dicarboxyethyl)-AMP + GDP + phosphate + 2 H(+). The protein operates within purine metabolism; AMP biosynthesis via de novo pathway; AMP from IMP: step 1/2. In terms of biological role, plays an important role in the de novo pathway of purine nucleotide biosynthesis. Catalyzes the first committed step in the biosynthesis of AMP from IMP. This chain is Adenylosuccinate synthetase, found in Pyrococcus sp. (strain ST700).